Reading from the N-terminus, the 103-residue chain is Acylphosphatase-2 (103 aa).

Positions 13-103 (SVDYEVFGRV…LQYNGFSTRY (91 aa)) constitute an Acylphosphatase-like domain. Active-site residues include R28 and N46.

It belongs to the acylphosphatase family.

It carries out the reaction an acyl phosphate + H2O = a carboxylate + phosphate + H(+). The chain is Acylphosphatase-2 (acyp2) from Xenopus tropicalis (Western clawed frog).